The chain runs to 409 residues: LL-diaminopimelate aminotransferase (409 aa).

Tyr-15 and Gly-42 together coordinate substrate. Pyridoxal 5'-phosphate is bound by residues Tyr-72, 108-109 (AK), Tyr-132, Asn-186, Tyr-217, and 245-247 (SFS). Lys-109, Tyr-132, and Asn-186 together coordinate substrate. The residue at position 248 (Lys-248) is an N6-(pyridoxal phosphate)lysine. Pyridoxal 5'-phosphate contacts are provided by Arg-256 and Asn-291. Substrate contacts are provided by Asn-291 and Arg-386.

It belongs to the class-I pyridoxal-phosphate-dependent aminotransferase family. LL-diaminopimelate aminotransferase subfamily. As to quaternary structure, homodimer. Requires pyridoxal 5'-phosphate as cofactor.

The catalysed reaction is (2S,6S)-2,6-diaminopimelate + 2-oxoglutarate = (S)-2,3,4,5-tetrahydrodipicolinate + L-glutamate + H2O + H(+). Its pathway is amino-acid biosynthesis; L-lysine biosynthesis via DAP pathway; LL-2,6-diaminopimelate from (S)-tetrahydrodipicolinate (aminotransferase route): step 1/1. Functionally, involved in the synthesis of meso-diaminopimelate (m-DAP or DL-DAP), required for both lysine and peptidoglycan biosynthesis. Catalyzes the direct conversion of tetrahydrodipicolinate to LL-diaminopimelate. The protein is LL-diaminopimelate aminotransferase of Desulforapulum autotrophicum (strain ATCC 43914 / DSM 3382 / VKM B-1955 / HRM2) (Desulfobacterium autotrophicum).